Here is a 384-residue protein sequence, read N- to C-terminus: Spermidine/putrescine import ATP-binding protein PotA (384 aa).

The ABC transporter domain maps to 6 to 238; that stretch reads IAFQNVSKVF…PINHFVATFI (233 aa). An ATP-binding site is contributed by 40 to 47; the sequence is GASGSGKS.

Belongs to the ABC transporter superfamily. Spermidine/putrescine importer (TC 3.A.1.11.1) family. In terms of assembly, the complex is composed of two ATP-binding proteins (PotA), two transmembrane proteins (PotB and PotC) and a solute-binding protein (PotD).

The protein resides in the cell membrane. The enzyme catalyses ATP + H2O + polyamine-[polyamine-binding protein]Side 1 = ADP + phosphate + polyamineSide 2 + [polyamine-binding protein]Side 1.. In terms of biological role, part of the ABC transporter complex PotABCD involved in spermidine/putrescine import. Responsible for energy coupling to the transport system. The polypeptide is Spermidine/putrescine import ATP-binding protein PotA (Streptococcus thermophilus (strain ATCC BAA-491 / LMD-9)).